Consider the following 269-residue polypeptide: GATA transcription factor 3 (269 aa).

Positions 136 to 143 (KPRTKRSR) match the Nuclear localization signal motif. The segment at 176 to 230 (LVFQRRCSHCGTNNTPQWRTGPVGPKTLCNACGVRFKSGRLCPEYRPADSPTFSN) adopts a GATA-type zinc-finger fold. A disordered region spans residues 245–269 (KSKELGEETGEASTKSDPVKFGSKW).

This sequence belongs to the type IV zinc-finger family. Class A subfamily. As to expression, mostly expressed in roots. Also expressed in stems, flowers and leaves.

The protein localises to the nucleus. Its function is as follows. Transcriptional activator that specifically binds 5'-GATA-3' or 5'-GAT-3' motifs within gene promoters. May be involved in the regulation of some light-responsive genes. This is GATA transcription factor 3 (GATA3) from Arabidopsis thaliana (Mouse-ear cress).